Reading from the N-terminus, the 408-residue chain is MELENICSGRVLCGNSACEKCFHKSFASHPYAKYWSENNTESPEFVNLKSASYFEFKCGECHHLFSARPCYVQNKFCPYCLDVKKICVDKNCTECYHKSFASDPLSIFWSDLNERRPRHIPKESHIRGMFNCHECGHNFETSIAVFIKYHKIRQIICPYCSEKMLCRDKNCIKCLTASFASRPEIVFWSSDNKMSPRHIFKNSKVNYIFSCTCGFKFTQSPLCIISSTKWWDRHDCKKYEYLKIECEKPQYFEDFEHYLSLVSAQKSINRIQSIPYIDVFDDIQFDQQSDIQSEPSPIFTTTKSVESADDIGTSGFTESSESTPLSDQPGCEYFEQIESVLGPDIDVDHFFSWYNETVNYNRPLKRQRQMTASEINELNDPNSVYNSPEFDHQGDQKKLTEENGCVVQ.

Positions 376–386 are enriched in polar residues; it reads NELNDPNSVYN. The interval 376–408 is disordered; it reads NELNDPNSVYNSPEFDHQGDQKKLTEENGCVVQ. Positions 389–401 are enriched in basic and acidic residues; it reads EFDHQGDQKKLTE.

This is an uncharacterized protein from Acanthamoeba polyphaga (Amoeba).